The sequence spans 98 residues: NADH-ubiquinone oxidoreductase chain 4L (98 aa).

The next 3 membrane-spanning stretches (helical) occupy residues 1 to 21 (MSMVYMNIMLAFTMSLIGLLM), 29 to 49 (SLLCLEGMMLSLFVMASLMIL), and 61 to 81 (IILLVFAACEAALGLALLVMI).

This sequence belongs to the complex I subunit 4L family. In terms of assembly, core subunit of respiratory chain NADH dehydrogenase (Complex I) which is composed of 45 different subunits.

It localises to the mitochondrion inner membrane. The catalysed reaction is a ubiquinone + NADH + 5 H(+)(in) = a ubiquinol + NAD(+) + 4 H(+)(out). Its function is as follows. Core subunit of the mitochondrial membrane respiratory chain NADH dehydrogenase (Complex I) which catalyzes electron transfer from NADH through the respiratory chain, using ubiquinone as an electron acceptor. Part of the enzyme membrane arm which is embedded in the lipid bilayer and involved in proton translocation. In Vicugna pacos (Alpaca), this protein is NADH-ubiquinone oxidoreductase chain 4L (MT-ND4L).